The following is a 514-amino-acid chain: 2-isopropylmalate synthase (514 aa).

One can recognise a Pyruvate carboxyltransferase domain in the interval I4–K266. Mn(2+) contacts are provided by D13, H201, H203, and N237. A regulatory domain region spans residues E390–S514.

It belongs to the alpha-IPM synthase/homocitrate synthase family. LeuA type 1 subfamily. As to quaternary structure, homodimer. It depends on Mn(2+) as a cofactor.

Its subcellular location is the cytoplasm. It catalyses the reaction 3-methyl-2-oxobutanoate + acetyl-CoA + H2O = (2S)-2-isopropylmalate + CoA + H(+). It participates in amino-acid biosynthesis; L-leucine biosynthesis; L-leucine from 3-methyl-2-oxobutanoate: step 1/4. Its function is as follows. Catalyzes the condensation of the acetyl group of acetyl-CoA with 3-methyl-2-oxobutanoate (2-ketoisovalerate) to form 3-carboxy-3-hydroxy-4-methylpentanoate (2-isopropylmalate). In Shouchella clausii (strain KSM-K16) (Alkalihalobacillus clausii), this protein is 2-isopropylmalate synthase.